We begin with the raw amino-acid sequence, 477 residues long: Ribulose bisphosphate carboxylase large chain (477 aa).

Residues 1-2 (MS) constitute a propeptide that is removed on maturation. Residue P3 is modified to N-acetylproline. The residue at position 14 (K14) is an N6,N6,N6-trimethyllysine. Substrate contacts are provided by N123 and T173. The active-site Proton acceptor is the K175. Residue K177 coordinates substrate. Residues K201, D203, and E204 each coordinate Mg(2+). Position 201 is an N6-carboxylysine (K201). The Proton acceptor role is filled by H294. R295, H327, and S379 together coordinate substrate.

This sequence belongs to the RuBisCO large chain family. Type I subfamily. As to quaternary structure, heterohexadecamer of 8 large chains and 8 small chains; disulfide-linked. The disulfide link is formed within the large subunit homodimers. Requires Mg(2+) as cofactor. In terms of processing, the disulfide bond which can form in the large chain dimeric partners within the hexadecamer appears to be associated with oxidative stress and protein turnover.

It is found in the plastid. It localises to the chloroplast. It catalyses the reaction 2 (2R)-3-phosphoglycerate + 2 H(+) = D-ribulose 1,5-bisphosphate + CO2 + H2O. It carries out the reaction D-ribulose 1,5-bisphosphate + O2 = 2-phosphoglycolate + (2R)-3-phosphoglycerate + 2 H(+). RuBisCO catalyzes two reactions: the carboxylation of D-ribulose 1,5-bisphosphate, the primary event in carbon dioxide fixation, as well as the oxidative fragmentation of the pentose substrate in the photorespiration process. Both reactions occur simultaneously and in competition at the same active site. This is Ribulose bisphosphate carboxylase large chain (rbcL) from Solanum lycopersicum (Tomato).